The chain runs to 305 residues: uncharacterized protein (305 aa).

Residues 1 to 29 (MKKWFSSISKKKVSFSTLLLLGSGIVLSS) form the signal peptide. The N-palmitoyl cysteine moiety is linked to residue cysteine 30. Cysteine 30 carries S-diacylglycerol cysteine lipidation. The interval 234–265 (FYNPDNSNGSNAPGSNQPNQDSGNNGSTTPAA) is disordered. Residues 237–258 (PDNSNGSNAPGSNQPNQDSGNN) show a composition bias toward polar residues.

The protein resides in the cell membrane. This is an uncharacterized protein from Mycoplasma pneumoniae (strain ATCC 29342 / M129 / Subtype 1) (Mycoplasmoides pneumoniae).